The primary structure comprises 859 residues: Leucine--tRNA ligase (859 aa).

Positions 42–52 match the 'HIGH' region motif; that stretch reads PYPSGRLHMGH. The 'KMSKS' region signature appears at 618–622; that stretch reads KMSKS. ATP is bound at residue Lys-621.

The protein belongs to the class-I aminoacyl-tRNA synthetase family.

The protein resides in the cytoplasm. The catalysed reaction is tRNA(Leu) + L-leucine + ATP = L-leucyl-tRNA(Leu) + AMP + diphosphate. The chain is Leucine--tRNA ligase from Shewanella baltica (strain OS155 / ATCC BAA-1091).